Reading from the N-terminus, the 99-residue chain is RNA-binding protein Hfq (99 aa).

One can recognise a Sm domain in the interval D10–I71. The interval V77–K99 is disordered.

This sequence belongs to the Hfq family. As to quaternary structure, homohexamer.

Its function is as follows. RNA chaperone that binds small regulatory RNA (sRNAs) and mRNAs to facilitate mRNA translational regulation in response to envelope stress, environmental stress and changes in metabolite concentrations. Also binds with high specificity to tRNAs. This chain is RNA-binding protein Hfq, found in Caldicellulosiruptor saccharolyticus (strain ATCC 43494 / DSM 8903 / Tp8T 6331).